Consider the following 470-residue polypeptide: L-seryl-tRNA(Sec) selenium transferase (470 aa).

An N6-(pyridoxal phosphate)lysine modification is found at K292.

It belongs to the SelA family. Pyridoxal 5'-phosphate is required as a cofactor.

It is found in the cytoplasm. The catalysed reaction is L-seryl-tRNA(Sec) + selenophosphate + H(+) = L-selenocysteinyl-tRNA(Sec) + phosphate. Its pathway is aminoacyl-tRNA biosynthesis; selenocysteinyl-tRNA(Sec) biosynthesis; selenocysteinyl-tRNA(Sec) from L-seryl-tRNA(Sec) (bacterial route): step 1/1. Converts seryl-tRNA(Sec) to selenocysteinyl-tRNA(Sec) required for selenoprotein biosynthesis. The protein is L-seryl-tRNA(Sec) selenium transferase of Moorella thermoacetica (strain ATCC 39073 / JCM 9320).